The chain runs to 122 residues: Large ribosomal subunit protein uL14c (122 aa).

It belongs to the universal ribosomal protein uL14 family. Part of the 50S ribosomal subunit.

The protein resides in the plastid. It localises to the chloroplast. In terms of biological role, binds to 23S rRNA. The protein is Large ribosomal subunit protein uL14c of Pleurastrum terricola (Filamentous green alga).